The chain runs to 107 residues: Basic phospholipase A2 sphenotoxin subunit B (107 aa).

Ca(2+)-binding residues include tyrosine 27, glycine 29, and glycine 31. 5 disulfide bridges follow: cysteine 28–cysteine 44, cysteine 43–cysteine 91, cysteine 50–cysteine 88, cysteine 57–cysteine 81, and cysteine 75–cysteine 86. Histidine 47 is an active-site residue. Residue aspartate 48 participates in Ca(2+) binding. Aspartate 89 is an active-site residue.

Belongs to the phospholipase A2 family. Group II subfamily. D49 sub-subfamily. As to quaternary structure, heterodimer of A and B chains; non-covalently linked. The acidic protein (B chain) has phospholipase A2 activity and the A chain weakly inhibits the B chain enzymatic activity but potentiates its lethal potency. As to expression, expressed by the venom gland.

It is found in the secreted. It catalyses the reaction a 1,2-diacyl-sn-glycero-3-phosphocholine + H2O = a 1-acyl-sn-glycero-3-phosphocholine + a fatty acid + H(+). In terms of biological role, heterodimer A-B: Sphenotoxin is a potent neurotoxin that possesses phospholipase A2 (PLA2) activity. It consists of a non-covalent association of a basic PLA2 subunit B with a non-enzymatic subunit A. Monomer B: Not found in vivo. In vitro, potent neurotoxin that possesses phospholipase A2 (PLA2) activity and exerts a lethal action by blocking neuromuscular transmission. Induces paralysis of the hind legs and neuromuscular blockade in mouse phrenic nerve-diaphragm preparations. PLA2 catalyzes the calcium-dependent hydrolysis of the 2-acyl groups in 3-sn-phosphoglycerides. This chain is Basic phospholipase A2 sphenotoxin subunit B, found in Ophryacus sphenophrys (Broad-horned pitviper).